The primary structure comprises 166 residues: Heme-degrading monooxygenase HmoB (166 aa).

Asn-33 provides a ligand contact to Fe cation. The region spanning 66-153 (FAVLNNIAVT…SAGIDTTSIF (88 aa)) is the ABM domain. His-138 is a heme binding site.

Belongs to the antibiotic biosynthesis monooxygenase family. In terms of assembly, homodimer.

It is found in the cytoplasm. It carries out the reaction heme b + 3 reduced [NADPH--hemoprotein reductase] + 3 O2 = biliverdin IXalpha + CO + Fe(2+) + 3 oxidized [NADPH--hemoprotein reductase] + 3 H2O + H(+). Functionally, catalyzes the oxidative degradation of the heme macrocyclic porphyrin ring in the presence of a suitable electron donor such as ascorbate or NADPH--cytochrome P450 reductase, with subsequent release of free iron. The protein is Heme-degrading monooxygenase HmoB (hmoB) of Bacillus subtilis (strain 168).